Consider the following 128-residue polypeptide: Platelet basic protein (128 aa).

Residues 1–34 form the signal peptide; the sequence is MSLRLDTTPSCNSARPLHALQVLLLLSLLLTALA. 2 cysteine pairs are disulfide-bonded: C63–C89 and C65–C105.

This sequence belongs to the intercrine alpha (chemokine CxC) family. In terms of assembly, beta-thromboglobulin is a homotetramer. Post-translationally, proteolytic removal of residues 1-9 produces the active peptide connective tissue-activating peptide III (CTAP-III) (low-affinity platelet factor IV (LA-PF4)). Proteolytic removal of residues 1-13 produces the active peptide beta-thromboglobulin, which is released from platelets along with platelet factor 4 and platelet-derived growth factor. In terms of processing, NAP-2(1-66) is produced by proteolytical processing, probably after secretion by leukocytes other than neutrophils. Post-translationally, NAP-2(73) and NAP-2(74) seem not be produced by proteolytical processing of secreted precursors but are released in an active form from platelets.

It localises to the secreted. LA-PF4 stimulates DNA synthesis, mitosis, glycolysis, intracellular cAMP accumulation, prostaglandin E2 secretion, and synthesis of hyaluronic acid and sulfated glycosaminoglycan. It also stimulates the formation and secretion of plasminogen activator by human synovial cells. NAP-2 is a ligand for CXCR1 and CXCR2, and NAP-2, NAP-2(73), NAP-2(74), NAP-2(1-66), and most potent NAP-2(1-63) are chemoattractants and activators for neutrophils. TC-1 and TC-2 are antibacterial proteins, in vitro released from activated platelet alpha-granules. CTAP-III(1-81) is more potent than CTAP-III desensitize chemokine-induced neutrophil activation. The protein is Platelet basic protein (PPBP) of Homo sapiens (Human).